We begin with the raw amino-acid sequence, 585 residues long: MASPGSGFWSFGSEDGSADPENPGTARAWCQVAQKFTGGIGNKLCALLYGDSGKPAEGGGSVTSRAATGKVACTCDQKPCNCPKGDVNYAFLHATDLLPACDGERPTLAFLQDVMNILLQYVVKSFDRSTKVIDFHYPNELLQEYNWELADQPQNLEEILTHCQTTLKYAIKTGHPRYFNQLSTGLDMVGLAADWLTSTANTNMFTYEIAPVFVLLEYVTLKKMREIIGWPGGSGDGIFSPGGAISNMYAMLIARYKMFPEVKEKGMAAVPRLIAFTSEHSHFSLKKGAAALGIGTDSVILIKCDERGKMIPSDLERRILEVKQKGFVPFLVSATAGTTVYGAFDPLLAVADICKKYKIWMHVDAAWGGGLLMSRKHKWKLSGVERANSVTWNPHKMMGVPLQCSALLVREEGLMQSCNQMHASYLFQQDKHYDLSYDTGDKALQCGRHVDVFKLWLMWRAKGTTGFEAHIDKCLELAEYLYTIIKNREGYEMVFDGKPQHTNVCFWFVPPSLRTLEDNEERMSRLSKVAPVIKARMMEYGTTMVSYQPLGDKVNFFRMVISNPAATHQDIDFLIEEIERLGQDL.

Positions 1-24 (MASPGSGFWSFGSEDGSADPENPG) are disordered. Ser-3, Ser-6, Ser-10, and Ser-13 each carry phosphoserine. 2 S-palmitoyl cysteine lipidation sites follow: Cys-30 and Cys-45. 181-183 (QLS) serves as a coordination point for substrate. Lys-396 bears the N6-(pyridoxal phosphate)lysine mark. Arg-558 provides a ligand contact to substrate.

The protein belongs to the group II decarboxylase family. Homodimer. Pyridoxal 5'-phosphate serves as cofactor. Phosphorylated; which does not affect kinetic parameters or subcellular location. Post-translationally, palmitoylated; which is required for presynaptic clustering.

The protein localises to the cytoplasm. It is found in the cytosol. The protein resides in the cytoplasmic vesicle. It localises to the presynaptic cell membrane. Its subcellular location is the golgi apparatus membrane. The enzyme catalyses L-glutamate + H(+) = 4-aminobutanoate + CO2. In terms of biological role, catalyzes the production of GABA. The protein is Glutamate decarboxylase 2 (Gad2) of Mus musculus (Mouse).